A 157-amino-acid polypeptide reads, in one-letter code: Transmembrane protein 42 (157 aa).

Helical transmembrane passes span Phe37 to Ala57, Ile67 to Phe87, Ile100 to Leu120, and Cys124 to His144.

It is found in the membrane. This is Transmembrane protein 42 (Tmem42) from Mus musculus (Mouse).